The primary structure comprises 340 residues: MKKILLLIPLAFAASLAWFVWLEPSPAPETAPPASPQAGADRAPPAASAGEAVPAPQVMPAKVAPLPTSFRGTSVDGSFSVDASGNLLITRDIRNLFDYFLSAVGEEPLQQSLDRLRAYIAAELQEPARGQALALMQQYIDYKKELVLLERDLPRLADLDALRQREAAVKALRARIFSNEAHVAFFADEETYNQFTLERLAIRQDGKLSAEEKAAAIDRLRASLPEDQQESVLPQLQSELQQQTAALQAAGAGPEAIRQMRQQLVGAEATTRLEQLDRQRSAWKGRLDDYFAEKSRIEGNTGLSEADRRAAVERLAEERFSEQERLRLGALEQMRQAEQR.

The helical transmembrane segment at 4–24 (ILLLIPLAFAASLAWFVWLEP) threads the bilayer. Residues 29–51 (ETAPPASPQAGADRAPPAASAGE) form a disordered region. Low complexity predominate over residues 36 to 51 (PQAGADRAPPAASAGE).

Belongs to the lipase chaperone family.

Its subcellular location is the cell inner membrane. May be involved in the folding of the extracellular lipase during its passage through the periplasm. The protein is Lipase chaperone (lifO) of Pseudomonas aeruginosa (strain ATCC 15692 / DSM 22644 / CIP 104116 / JCM 14847 / LMG 12228 / 1C / PRS 101 / PAO1).